Here is a 288-residue protein sequence, read N- to C-terminus: Bifunctional protein FolD (288 aa).

NADP(+) contacts are provided by residues 166–168 and Ile232; that span reads GAS.

It belongs to the tetrahydrofolate dehydrogenase/cyclohydrolase family. Homodimer.

It catalyses the reaction (6R)-5,10-methylene-5,6,7,8-tetrahydrofolate + NADP(+) = (6R)-5,10-methenyltetrahydrofolate + NADPH. It carries out the reaction (6R)-5,10-methenyltetrahydrofolate + H2O = (6R)-10-formyltetrahydrofolate + H(+). It functions in the pathway one-carbon metabolism; tetrahydrofolate interconversion. Functionally, catalyzes the oxidation of 5,10-methylenetetrahydrofolate to 5,10-methenyltetrahydrofolate and then the hydrolysis of 5,10-methenyltetrahydrofolate to 10-formyltetrahydrofolate. The chain is Bifunctional protein FolD from Cronobacter sakazakii (strain ATCC BAA-894) (Enterobacter sakazakii).